Consider the following 484-residue polypeptide: tRNA sulfurtransferase (484 aa).

Residues 63-167 form the THUMP domain; it reads QAFGERLACI…GDKLYMVTKR (105 aa). ATP-binding positions include 185–186, lysine 267, glycine 289, and glutamine 298; that span reads LI. Cysteines 346 and 458 form a disulfide. Positions 406 to 484 constitute a Rhodanese domain; it reads IDTNEVVIDI…GYHNVKVYRP (79 aa). Catalysis depends on cysteine 458, which acts as the Cysteine persulfide intermediate.

This sequence belongs to the ThiI family.

The protein localises to the cytoplasm. It catalyses the reaction [ThiI sulfur-carrier protein]-S-sulfanyl-L-cysteine + a uridine in tRNA + 2 reduced [2Fe-2S]-[ferredoxin] + ATP + H(+) = [ThiI sulfur-carrier protein]-L-cysteine + a 4-thiouridine in tRNA + 2 oxidized [2Fe-2S]-[ferredoxin] + AMP + diphosphate. The catalysed reaction is [ThiS sulfur-carrier protein]-C-terminal Gly-Gly-AMP + S-sulfanyl-L-cysteinyl-[cysteine desulfurase] + AH2 = [ThiS sulfur-carrier protein]-C-terminal-Gly-aminoethanethioate + L-cysteinyl-[cysteine desulfurase] + A + AMP + 2 H(+). It functions in the pathway cofactor biosynthesis; thiamine diphosphate biosynthesis. Catalyzes the ATP-dependent transfer of a sulfur to tRNA to produce 4-thiouridine in position 8 of tRNAs, which functions as a near-UV photosensor. Also catalyzes the transfer of sulfur to the sulfur carrier protein ThiS, forming ThiS-thiocarboxylate. This is a step in the synthesis of thiazole, in the thiamine biosynthesis pathway. The sulfur is donated as persulfide by IscS. The protein is tRNA sulfurtransferase of Shewanella oneidensis (strain ATCC 700550 / JCM 31522 / CIP 106686 / LMG 19005 / NCIMB 14063 / MR-1).